We begin with the raw amino-acid sequence, 237 residues long: METKHLRKLLQLYQACGGEQELTKTVQNVTSSPLTPTPPPQPPSALDSTMALTIFILLVALFFMGFFSVYFRHFADSSSSTVDISSMPRTRSSRMSPRRLSTSVVVSRPYSFRRGLDSQAVRSLPVYRYTKAAKQRNEDCVICLSDFEEGETVKVIPHCGHVFHVDCVDTWLSSYVTCPLCRSNQLFSDKDLGMQEPPDQDSAEEHDTCDGVDTCVRRCSSCSSLGQRTGLERSLSL.

A helical membrane pass occupies residues 51 to 71 (ALTIFILLVALFFMGFFSVYF). The RING-type; atypical zinc finger occupies 140–182 (CVICLSDFEEGETVKVIPHCGHVFHVDCVDTWLSSYVTCPLCR).

The protein belongs to the RING-type zinc finger family. ATL subfamily.

It localises to the membrane. It carries out the reaction S-ubiquitinyl-[E2 ubiquitin-conjugating enzyme]-L-cysteine + [acceptor protein]-L-lysine = [E2 ubiquitin-conjugating enzyme]-L-cysteine + N(6)-ubiquitinyl-[acceptor protein]-L-lysine.. Its pathway is protein modification; protein ubiquitination. The sequence is that of RING-H2 finger protein ATL57 (ATL57) from Arabidopsis thaliana (Mouse-ear cress).